Reading from the N-terminus, the 452-residue chain is Protein tipE (452 aa).

The Cytoplasmic segment spans residues 1 to 20 (MGDEQDKRTGKEKLLFYTTA). A helical membrane pass occupies residues 21–41 (FFILLGTFSLFAFLFLVPFVI). Topologically, residues 42–274 (EPAFTTIFMQ…ISDLDYWQNT (233 aa)) are extracellular. Asparagine 72, asparagine 102, asparagine 108, asparagine 212, and asparagine 237 each carry an N-linked (GlcNAc...) asparagine glycan. A helical transmembrane segment spans residues 275-295 (LNLVYSMAIPIPSFIISVIYL). Residues 296–452 (TYAYFKIYNE…STPPGPTAAV (157 aa)) are Cytoplasmic-facing. Residues 423-444 (AISTSNSVQGNLSKTMTTSIST) show a composition bias toward polar residues. Positions 423–452 (AISTSNSVQGNLSKTMTTSISTPPGPTAAV) are disordered.

In terms of tissue distribution, preferentially expressed in the central nervous system of developing embryos, weaker expression is seen in the peripheral nervous system. In pupae and adults, expression is seen predominantly in heads, body and legs.

It is found in the membrane. Its function is as follows. Enhances para sodium channel function. Required during pupal development to rescue adult paralysis and also protects adult flies against heat-induced lethality. This is Protein tipE (tipE) from Drosophila melanogaster (Fruit fly).